The following is a 312-amino-acid chain: Taste receptor type 2 member 103 (312 aa).

Residues 1–6 are Extracellular-facing; the sequence is MVLTIR. The chain crosses the membrane as a helical span at residues 7 to 27; sequence AILWVTLITIISLEFIIGILG. The Cytoplasmic portion of the chain corresponds to 28-61; sequence NVFIALVNIIDWVKRGKISAVDKTYMALAISRTA. Residues 62-82 traverse the membrane as a helical segment; sequence FLLSLITGFLVSLLDPALLGM. Topologically, residues 83 to 92 are extracellular; the sequence is RTMVRLLTIS. Residues 93-113 form a helical membrane-spanning segment; it reads WMVTNHFSVWFATCLSIFYFL. The Cytoplasmic portion of the chain corresponds to 114-132; that stretch reads KIANFSNSIFLVLKWEAKK. Residues 133-153 traverse the membrane as a helical segment; that stretch reads VVSVTLVVSVIILIMNIIVIN. Topologically, residues 154-185 are extracellular; sequence KFTDRLQVNTLQNCSTSNTLKDYGLFLFISTG. N-linked (GlcNAc...) asparagine glycosylation occurs at N166. The chain crosses the membrane as a helical span at residues 186–206; it reads FTLTPFAVSLTMFLLLIFSLW. Over 207–229 the chain is Cytoplasmic; sequence RHLKNMCHSATGSRDVSTVAHIK. The helical transmembrane segment at 230–250 threads the bilayer; that stretch reads GLQTVVTFLLLYTAFVMSLLS. Residues 251–264 lie on the Extracellular side of the membrane; that stretch reads ESLNINIQHTNLLS. The helical transmembrane segment at 265 to 285 threads the bilayer; the sequence is HFLRSIGVAFPTGHSCVLILG. Residues 286 to 312 lie on the Cytoplasmic side of the membrane; sequence NSKLRQASLSVILWLRYKYKHIENWGP.

It belongs to the G-protein coupled receptor T2R family. As to expression, expressed in subsets of taste receptor cells of the tongue and palate epithelium and exclusively in gustducin-positive cells. Expressed in 15% taste bud cells in circumvallate and foliate papillae but only in 2% in fungiform papillae.

The protein localises to the membrane. Functionally, gustducin-coupled receptor implicated in the perception of bitter compounds in the oral cavity and the gastrointestinal tract. Signals through PLCB2 and the calcium-regulated cation channel TRPM5. In Mus musculus (Mouse), this protein is Taste receptor type 2 member 103 (Tas2r103).